A 338-amino-acid polypeptide reads, in one-letter code: Tetraacyldisaccharide 4'-kinase (338 aa).

Ile-67 to Thr-74 contacts ATP.

This sequence belongs to the LpxK family.

It carries out the reaction a lipid A disaccharide + ATP = a lipid IVA + ADP + H(+). It functions in the pathway glycolipid biosynthesis; lipid IV(A) biosynthesis; lipid IV(A) from (3R)-3-hydroxytetradecanoyl-[acyl-carrier-protein] and UDP-N-acetyl-alpha-D-glucosamine: step 6/6. Transfers the gamma-phosphate of ATP to the 4'-position of a tetraacyldisaccharide 1-phosphate intermediate (termed DS-1-P) to form tetraacyldisaccharide 1,4'-bis-phosphate (lipid IVA). In Acidovorax sp. (strain JS42), this protein is Tetraacyldisaccharide 4'-kinase.